Here is a 207-residue protein sequence, read N- to C-terminus: SPRY domain-containing protein 4 (207 aa).

The B30.2/SPRY domain maps to Tyr12–Leu207. N6-acetyllysine occurs at positions 53 and 130. Lys139 carries the post-translational modification N6-succinyllysine.

The polypeptide is SPRY domain-containing protein 4 (Spryd4) (Mus musculus (Mouse)).